Reading from the N-terminus, the 715-residue chain is Methionine--tRNA ligase (715 aa).

A 'HIGH' region motif is present at residues 17 to 27; sequence PYANGPIHLGH. Zn(2+) is bound by residues Cys-148, Cys-151, Cys-161, and Cys-164. The 'KMSKS' region motif lies at 359-363; sequence KMSKS. Lys-362 is a binding site for ATP. Positions 614–715 constitute a tRNA-binding domain; it reads DLSKVELRVG…KDAKPGDRLK (102 aa).

It belongs to the class-I aminoacyl-tRNA synthetase family. MetG type 1 subfamily. As to quaternary structure, homodimer. Requires Zn(2+) as cofactor.

The protein resides in the cytoplasm. The enzyme catalyses tRNA(Met) + L-methionine + ATP = L-methionyl-tRNA(Met) + AMP + diphosphate. Is required not only for elongation of protein synthesis but also for the initiation of all mRNA translation through initiator tRNA(fMet) aminoacylation. The protein is Methionine--tRNA ligase of Leptospira interrogans serogroup Icterohaemorrhagiae serovar Lai (strain 56601).